Reading from the N-terminus, the 278-residue chain is Phosphoenolpyruvate carboxylase kinase 2 (278 aa).

Residues 11–269 (YQLCDEIGRG…AEDALRHSWM (259 aa)) form the Protein kinase domain. ATP contacts are provided by residues 17 to 25 (IGRGRFGTI) and Lys-40. Asp-137 serves as the catalytic Proton acceptor.

The protein belongs to the protein kinase superfamily. Ser/Thr protein kinase family. Expressed in flowers and roots, and at lower levels in cauline leaves. Barely detectable in rosette leaves and stems.

It carries out the reaction L-seryl-[protein] + ATP = O-phospho-L-seryl-[protein] + ADP + H(+). The enzyme catalyses L-threonyl-[protein] + ATP = O-phospho-L-threonyl-[protein] + ADP + H(+). Calcium-independent kinase involved in light-dependent phosphoenolpyruvate carboxylase phosphorylation. The polypeptide is Phosphoenolpyruvate carboxylase kinase 2 (PPCK2) (Arabidopsis thaliana (Mouse-ear cress)).